Consider the following 650-residue polypeptide: Sterol O-acyltransferase 2 (650 aa).

The disordered stretch occupies residues 41 to 79; it reads LTSSNNSCASEHEGEGEGEDERPATTSSAPTQNHSAGDV. Over residues 64-75 the composition is skewed to polar residues; the sequence is ATTSSAPTQNHS. 5 consecutive transmembrane segments (helical) span residues 223 to 243, 300 to 320, 412 to 432, 450 to 470, and 493 to 513; these read FSGLYVAFWMAIAFGAVKALI, TGWAFTSIYELLFVGFYMYLT, INVSNFFMFTMFPTLIYQIEY, IFGTIFLMMIDAQILMHPVAM, and LLVDIVPGFIVMYILDFYLIW. An FYXDWWN motif motif is present at residues 531 to 537; sequence FYGDWWN. A run of 2 helical transmembrane segments spans residues 575–595 and 630–650; these read ATLMTFFLSSVVHELAMYVIF and VIFWLGICMGPSVMCTLYLTF. Residue histidine 587 is part of the active site.

This sequence belongs to the membrane-bound acyltransferase family. Sterol o-acyltransferase subfamily.

Its subcellular location is the endoplasmic reticulum membrane. Its function is as follows. Sterol O-acyltransferase that catalyzes the formation of stery esters. In Saccharomyces uvarum (strain ATCC 76518 / CBS 7001 / CLIB 283 / NBRC 10550 / MCYC 623 / NCYC 2669 / NRRL Y-11845) (Yeast), this protein is Sterol O-acyltransferase 2 (ARE2).